Here is a 302-residue protein sequence, read N- to C-terminus: Tyrosine recombinase XerC (302 aa).

Residues 6 to 90 form the Core-binding (CB) domain; it reads DLEVTCLQDY…AIKQWGEFLL (85 aa). The 180-residue stretch at 111–290 folds into the Tyr recombinase domain; the sequence is PLPKNMDVDS…DFQHLAKVYD (180 aa). Active-site residues include R150, K174, H242, R245, and H268. The O-(3'-phospho-DNA)-tyrosine intermediate role is filled by Y277.

It belongs to the 'phage' integrase family. XerC subfamily. In terms of assembly, forms a cyclic heterotetrameric complex composed of two molecules of XerC and two molecules of XerD.

Its subcellular location is the cytoplasm. Its function is as follows. Site-specific tyrosine recombinase, which acts by catalyzing the cutting and rejoining of the recombining DNA molecules. The XerC-XerD complex is essential to convert dimers of the bacterial chromosome into monomers to permit their segregation at cell division. It also contributes to the segregational stability of plasmids. This is Tyrosine recombinase XerC from Shewanella putrefaciens (strain CN-32 / ATCC BAA-453).